The primary structure comprises 258 residues: Imidazole glycerol phosphate synthase subunit HisF (258 aa).

Catalysis depends on residues Asp11 and Asp130.

This sequence belongs to the HisA/HisF family. As to quaternary structure, heterodimer of HisH and HisF.

It localises to the cytoplasm. It catalyses the reaction 5-[(5-phospho-1-deoxy-D-ribulos-1-ylimino)methylamino]-1-(5-phospho-beta-D-ribosyl)imidazole-4-carboxamide + L-glutamine = D-erythro-1-(imidazol-4-yl)glycerol 3-phosphate + 5-amino-1-(5-phospho-beta-D-ribosyl)imidazole-4-carboxamide + L-glutamate + H(+). It participates in amino-acid biosynthesis; L-histidine biosynthesis; L-histidine from 5-phospho-alpha-D-ribose 1-diphosphate: step 5/9. In terms of biological role, IGPS catalyzes the conversion of PRFAR and glutamine to IGP, AICAR and glutamate. The HisF subunit catalyzes the cyclization activity that produces IGP and AICAR from PRFAR using the ammonia provided by the HisH subunit. The polypeptide is Imidazole glycerol phosphate synthase subunit HisF (Pectobacterium carotovorum subsp. carotovorum (strain PC1)).